Consider the following 327-residue polypeptide: Glycerol-3-phosphate dehydrogenase [NAD(P)+] (327 aa).

The NADPH site is built by phenylalanine 14, arginine 35, and lysine 108. 2 residues coordinate sn-glycerol 3-phosphate: lysine 108 and glycine 136. Alanine 140 serves as a coordination point for NADPH. 5 residues coordinate sn-glycerol 3-phosphate: lysine 191, aspartate 244, serine 254, arginine 255, and asparagine 256. Lysine 191 acts as the Proton acceptor in catalysis. Arginine 255 is a binding site for NADPH. Positions 275 and 277 each coordinate NADPH.

Belongs to the NAD-dependent glycerol-3-phosphate dehydrogenase family.

The protein localises to the cytoplasm. The enzyme catalyses sn-glycerol 3-phosphate + NAD(+) = dihydroxyacetone phosphate + NADH + H(+). The catalysed reaction is sn-glycerol 3-phosphate + NADP(+) = dihydroxyacetone phosphate + NADPH + H(+). The protein operates within membrane lipid metabolism; glycerophospholipid metabolism. In terms of biological role, catalyzes the reduction of the glycolytic intermediate dihydroxyacetone phosphate (DHAP) to sn-glycerol 3-phosphate (G3P), the key precursor for phospholipid synthesis. The chain is Glycerol-3-phosphate dehydrogenase [NAD(P)+] from Agrobacterium fabrum (strain C58 / ATCC 33970) (Agrobacterium tumefaciens (strain C58)).